Consider the following 73-residue polypeptide: NADH dehydrogenase [ubiquinone] 1 beta subcomplex subunit 3-B (73 aa).

A helical membrane pass occupies residues 31 to 48 (ALPGLGIGVAAFCVYLVG).

Belongs to the complex I NDUFB3 subunit family. In terms of assembly, complex I is composed of at least 49 different subunits.

The protein resides in the mitochondrion inner membrane. Its function is as follows. Accessory subunit of the mitochondrial membrane respiratory chain NADH dehydrogenase (Complex I), that is believed not to be involved in catalysis. Complex I functions in the transfer of electrons from NADH to the respiratory chain. The immediate electron acceptor for the enzyme is believed to be ubiquinone. The polypeptide is NADH dehydrogenase [ubiquinone] 1 beta subcomplex subunit 3-B (Arabidopsis thaliana (Mouse-ear cress)).